The sequence spans 777 residues: Lon protease (777 aa).

The Lon N-terminal domain occupies 11–204; it reads IPVLPLRDVV…FLMAIMETEI (194 aa). An ATP-binding site is contributed by 356 to 363; that stretch reads GPPGVGKT. Residues 592–773 form the Lon proteolytic domain; it reads LNQIGQVVGL…EEVLKIALEN (182 aa). Catalysis depends on residues S679 and K722.

It belongs to the peptidase S16 family. As to quaternary structure, homohexamer. Organized in a ring with a central cavity.

The protein localises to the cytoplasm. It catalyses the reaction Hydrolysis of proteins in presence of ATP.. In terms of biological role, ATP-dependent serine protease that mediates the selective degradation of mutant and abnormal proteins as well as certain short-lived regulatory proteins. Required for cellular homeostasis and for survival from DNA damage and developmental changes induced by stress. Degrades polypeptides processively to yield small peptide fragments that are 5 to 10 amino acids long. Binds to DNA in a double-stranded, site-specific manner. The chain is Lon protease from Buchnera aphidicola subsp. Schizaphis graminum (strain Sg).